The following is a 185-amino-acid chain: Ribosome-recycling factor (185 aa).

It belongs to the RRF family.

It localises to the cytoplasm. Its function is as follows. Responsible for the release of ribosomes from messenger RNA at the termination of protein biosynthesis. May increase the efficiency of translation by recycling ribosomes from one round of translation to another. This Kineococcus radiotolerans (strain ATCC BAA-149 / DSM 14245 / SRS30216) protein is Ribosome-recycling factor.